The chain runs to 791 residues: AP-1 complex subunit gamma-like 2 (791 aa).

A GAE domain is found at 671 to 786 (APIPSVRVFE…QEIFEVDNLP (116 aa)).

It belongs to the adaptor complexes large subunit family. As to quaternary structure, may interact with AP1S1/Sigma1A-adaptin and AP1S2/Sigma1B-adaptin. Probably does not interact with APB1. Interacts (via GAE domain) with RABEP1, NECAP1, CLINT1 and AFTPH/aftiphilin. Interacts with HBV major surface antigen L. Interacts with HBV core protein C in a ubiquitin-dependent manner. Binds ubiquitin. Widely expressed.

Its subcellular location is the golgi apparatus membrane. The protein resides in the cytoplasmic vesicle membrane. The protein localises to the endosome membrane. Functionally, may function in protein sorting in late endosomes or multivesucular bodies (MVBs). Involved in MVB-assisted maturation of hepatitis B virus (HBV). The protein is AP-1 complex subunit gamma-like 2 (Ap1g2) of Mus musculus (Mouse).